The chain runs to 96 residues: MHVTLVEINVKEDKVDQFIEVFRANHLGSIREAGNLRFDVLRDEHIPTRFYIYEAYTDEAAVAIHKTTPHYLQCVEQLAPLMTGPRKKTVFIGLMP.

In terms of domain architecture, ABM spans 2–91 (HVTLVEINVK…MTGPRKKTVF (90 aa)).

The protein belongs to the LsrG family. In terms of assembly, homodimer.

The protein localises to the cytoplasm. It carries out the reaction (2S)-2-hydroxy-3,4-dioxopentyl phosphate = 3-hydroxy-2,4-dioxopentyl phosphate. Involved in the degradation of phospho-AI-2, thereby terminating induction of the lsr operon and closing the AI-2 signaling cycle. Catalyzes the conversion of (4S)-4-hydroxy-5-phosphonooxypentane-2,3-dione (P-DPD) to 3-hydroxy-5-phosphonooxypentane-2,4-dione (P-HPD). The sequence is that of (4S)-4-hydroxy-5-phosphonooxypentane-2,3-dione isomerase from Yersinia pseudotuberculosis serotype O:1b (strain IP 31758).